The following is a 200-amino-acid chain: NAD(P)H dehydrogenase (quinone) (200 aa).

One can recognise a Flavodoxin-like domain in the interval 4-191 (VLVLYYSSYG…DIARYQGKHV (188 aa)). FMN-binding positions include 10-15 (SSYGHV) and 79-81 (TRF). Position 12 (Tyr-12) interacts with NAD(+). Residue Trp-99 coordinates substrate. FMN is bound by residues 114-120 (STGTQHG) and His-135.

This sequence belongs to the WrbA family. The cofactor is FMN.

It carries out the reaction a quinone + NADH + H(+) = a quinol + NAD(+). The enzyme catalyses a quinone + NADPH + H(+) = a quinol + NADP(+). This is NAD(P)H dehydrogenase (quinone) from Burkholderia cenocepacia (strain ATCC BAA-245 / DSM 16553 / LMG 16656 / NCTC 13227 / J2315 / CF5610) (Burkholderia cepacia (strain J2315)).